The sequence spans 303 residues: MKIIFMGSPEFSVSALSYLLENESHEVVAVYTKIPKPAGRRGRILTKTPVHIIAEQNNIEVNTPKSLKHDAEQEKILSLNPDVIVVVAYGLIIPQGVLSIPKYGCINIHPSLLPRWRGAAPIHYAILSGDDKTGVTIIQMNELLDEGDILLQRDIPIDEQDNIDTLSKKLAHLGSSMLIEVLDNIDNLVPIKQNNDDATYAHKIIDFHIDFNEAADVICRKVRALYPRAFLLFNGKRLRILKTSYYSDSSVQDLKPGAVIDSHMNIKCKDGVLVPLVVQMEGKNPCNIDDFILGYNVLNCSIA.

Residue serine 111–proline 114 coordinates (6S)-5,6,7,8-tetrahydrofolate.

The protein belongs to the Fmt family.

It catalyses the reaction L-methionyl-tRNA(fMet) + (6R)-10-formyltetrahydrofolate = N-formyl-L-methionyl-tRNA(fMet) + (6S)-5,6,7,8-tetrahydrofolate + H(+). Attaches a formyl group to the free amino group of methionyl-tRNA(fMet). The formyl group appears to play a dual role in the initiator identity of N-formylmethionyl-tRNA by promoting its recognition by IF2 and preventing the misappropriation of this tRNA by the elongation apparatus. The protein is Methionyl-tRNA formyltransferase of Ehrlichia canis (strain Jake).